A 448-amino-acid chain; its full sequence is Probable glycine dehydrogenase (decarboxylating) subunit 1 (448 aa).

The protein belongs to the GcvP family. N-terminal subunit subfamily. As to quaternary structure, the glycine cleavage system is composed of four proteins: P, T, L and H. In this organism, the P 'protein' is a heterodimer of two subunits.

The catalysed reaction is N(6)-[(R)-lipoyl]-L-lysyl-[glycine-cleavage complex H protein] + glycine + H(+) = N(6)-[(R)-S(8)-aminomethyldihydrolipoyl]-L-lysyl-[glycine-cleavage complex H protein] + CO2. In terms of biological role, the glycine cleavage system catalyzes the degradation of glycine. The P protein binds the alpha-amino group of glycine through its pyridoxal phosphate cofactor; CO(2) is released and the remaining methylamine moiety is then transferred to the lipoamide cofactor of the H protein. This Geobacillus kaustophilus (strain HTA426) protein is Probable glycine dehydrogenase (decarboxylating) subunit 1.